We begin with the raw amino-acid sequence, 31 residues long: Cytochrome b6-f complex subunit 6 (31 aa).

The helical transmembrane segment at 4–24 (LTSYFGFLLAALTITSVLFIG) threads the bilayer.

It belongs to the PetL family. The 4 large subunits of the cytochrome b6-f complex are cytochrome b6, subunit IV (17 kDa polypeptide, PetD), cytochrome f and the Rieske protein, while the 4 small subunits are PetG, PetL, PetM and PetN. The complex functions as a dimer.

Its subcellular location is the plastid. The protein localises to the chloroplast thylakoid membrane. In terms of biological role, component of the cytochrome b6-f complex, which mediates electron transfer between photosystem II (PSII) and photosystem I (PSI), cyclic electron flow around PSI, and state transitions. PetL is important for photoautotrophic growth as well as for electron transfer efficiency and stability of the cytochrome b6-f complex. The protein is Cytochrome b6-f complex subunit 6 of Silene conica (Striped corn catchfly).